We begin with the raw amino-acid sequence, 83 residues long: Apolipoprotein C-I, acidic form (83 aa).

Residues 1-26 (MRLFLSLPVLVVVLSMVLEGPAPAQG) form the signal peptide.

It belongs to the apolipoprotein C1 family.

The protein resides in the secreted. Functionally, inhibitor of lipoprotein binding to the low density lipoprotein (LDL) receptor, LDL receptor-related protein, and very low density lipoprotein (VLDL) receptor. Associates with high density lipoproteins (HDL) and the triacylglycerol-rich lipoproteins in the plasma and makes up about 10% of the protein of the VLDL and 2% of that of HDL. Appears to interfere directly with fatty acid uptake and is also the major plasma inhibitor of cholesteryl ester transfer protein (CETP). Binds free fatty acids and reduces their intracellular esterification. Modulates the interaction of APOE with beta-migrating VLDL and inhibits binding of beta-VLDL to the LDL receptor-related protein. In Pongo abelii (Sumatran orangutan), this protein is Apolipoprotein C-I, acidic form (APOC1A).